The primary structure comprises 361 residues: Phospho-N-acetylmuramoyl-pentapeptide-transferase (361 aa).

The next 10 helical transmembrane spans lie at 25–45, 73–93, 98–118, 139–159, 168–188, 200–220, 237–257, 264–284, 289–309, and 339–359; these read RGIL…PAVI, TMGG…WGDL, VWLV…DDWI, IFGL…AAIT, IALP…IVGF, GLAI…AYAS, AGEL…FLWF, VFMG…IAVI, MVLV…MIQV, and VIVR…ATLK.

This sequence belongs to the glycosyltransferase 4 family. MraY subfamily. The cofactor is Mg(2+).

It localises to the cell inner membrane. It catalyses the reaction UDP-N-acetyl-alpha-D-muramoyl-L-alanyl-gamma-D-glutamyl-meso-2,6-diaminopimeloyl-D-alanyl-D-alanine + di-trans,octa-cis-undecaprenyl phosphate = di-trans,octa-cis-undecaprenyl diphospho-N-acetyl-alpha-D-muramoyl-L-alanyl-D-glutamyl-meso-2,6-diaminopimeloyl-D-alanyl-D-alanine + UMP. Its pathway is cell wall biogenesis; peptidoglycan biosynthesis. In terms of biological role, catalyzes the initial step of the lipid cycle reactions in the biosynthesis of the cell wall peptidoglycan: transfers peptidoglycan precursor phospho-MurNAc-pentapeptide from UDP-MurNAc-pentapeptide onto the lipid carrier undecaprenyl phosphate, yielding undecaprenyl-pyrophosphoryl-MurNAc-pentapeptide, known as lipid I. This is Phospho-N-acetylmuramoyl-pentapeptide-transferase from Xanthomonas axonopodis pv. citri (strain 306).